Consider the following 115-residue polypeptide: NAD(P)H-quinone oxidoreductase subunit M (115 aa).

Belongs to the complex I NdhM subunit family. As to quaternary structure, NDH-1 can be composed of about 15 different subunits; different subcomplexes with different compositions have been identified which probably have different functions.

Its subcellular location is the cellular thylakoid membrane. It catalyses the reaction a plastoquinone + NADH + (n+1) H(+)(in) = a plastoquinol + NAD(+) + n H(+)(out). It carries out the reaction a plastoquinone + NADPH + (n+1) H(+)(in) = a plastoquinol + NADP(+) + n H(+)(out). In terms of biological role, NDH-1 shuttles electrons from an unknown electron donor, via FMN and iron-sulfur (Fe-S) centers, to quinones in the respiratory and/or the photosynthetic chain. The immediate electron acceptor for the enzyme in this species is believed to be plastoquinone. Couples the redox reaction to proton translocation, and thus conserves the redox energy in a proton gradient. Cyanobacterial NDH-1 also plays a role in inorganic carbon-concentration. This chain is NAD(P)H-quinone oxidoreductase subunit M, found in Prochlorococcus marinus (strain MIT 9211).